The primary structure comprises 328 residues: DNA-directed RNA polymerase subunit alpha (328 aa).

The tract at residues 1-235 (MQGSVTEFLK…EQLDAFVDLR (235 aa)) is alpha N-terminal domain (alpha-NTD). The segment at 249-328 (FDPILLRPVD…ENWPPASLAE (80 aa)) is alpha C-terminal domain (alpha-CTD).

Belongs to the RNA polymerase alpha chain family. In terms of assembly, homodimer. The RNAP catalytic core consists of 2 alpha, 1 beta, 1 beta' and 1 omega subunit. When a sigma factor is associated with the core the holoenzyme is formed, which can initiate transcription.

It carries out the reaction RNA(n) + a ribonucleoside 5'-triphosphate = RNA(n+1) + diphosphate. Functionally, DNA-dependent RNA polymerase catalyzes the transcription of DNA into RNA using the four ribonucleoside triphosphates as substrates. The protein is DNA-directed RNA polymerase subunit alpha of Pseudoalteromonas translucida (strain TAC 125).